Here is a 141-residue protein sequence, read N- to C-terminus: Galactose-6-phosphate isomerase subunit LacA (141 aa).

Belongs to the LacAB/RpiB family. In terms of assembly, heteromultimeric protein consisting of LacA and LacB.

It carries out the reaction aldehydo-D-galactose 6-phosphate = keto-D-tagatose 6-phosphate. The protein operates within carbohydrate metabolism; D-galactose 6-phosphate degradation; D-tagatose 6-phosphate from D-galactose 6-phosphate: step 1/1. This is Galactose-6-phosphate isomerase subunit LacA from Streptococcus equi subsp. zooepidemicus (strain MGCS10565).